The following is a 178-amino-acid chain: Inorganic pyrophosphatase (178 aa).

Positions 30, 44, and 56 each coordinate substrate. Positions 66, 71, and 103 each coordinate Mg(2+). Y142 contacts substrate.

Belongs to the PPase family. In terms of assembly, homohexamer. Mg(2+) is required as a cofactor.

It is found in the cytoplasm. It catalyses the reaction diphosphate + H2O = 2 phosphate + H(+). Functionally, catalyzes the hydrolysis of inorganic pyrophosphate (PPi) forming two phosphate ions. The chain is Inorganic pyrophosphatase from Xanthomonas campestris pv. campestris (strain ATCC 33913 / DSM 3586 / NCPPB 528 / LMG 568 / P 25).